The chain runs to 231 residues: Large ribosomal subunit protein uL1 (231 aa).

This sequence belongs to the universal ribosomal protein uL1 family. In terms of assembly, part of the 50S ribosomal subunit.

Binds directly to 23S rRNA. The L1 stalk is quite mobile in the ribosome, and is involved in E site tRNA release. In terms of biological role, protein L1 is also a translational repressor protein, it controls the translation of the L11 operon by binding to its mRNA. This is Large ribosomal subunit protein uL1 from Neisseria meningitidis serogroup C (strain 053442).